Reading from the N-terminus, the 303-residue chain is Dihydroorotate dehydrogenase B (NAD(+)), catalytic subunit (303 aa).

FMN is bound by residues S21 and 45–46 (KG). Substrate-binding positions include K45 and 69 to 73 (NCIGL). Residues N98 and N126 each contribute to the FMN site. Substrate is bound at residue N126. C129 functions as the Nucleophile in the catalytic mechanism. K165 and V191 together coordinate FMN. 192 to 193 (NT) contributes to the substrate binding site. FMN is bound by residues G217 and 243-244 (GG).

This sequence belongs to the dihydroorotate dehydrogenase family. Type 1 subfamily. As to quaternary structure, heterotetramer of 2 PyrK and 2 PyrD type B subunits. FMN serves as cofactor.

The protein resides in the cytoplasm. It carries out the reaction (S)-dihydroorotate + NAD(+) = orotate + NADH + H(+). It participates in pyrimidine metabolism; UMP biosynthesis via de novo pathway; orotate from (S)-dihydroorotate (NAD(+) route): step 1/1. In terms of biological role, catalyzes the conversion of dihydroorotate to orotate with NAD(+) as electron acceptor. In Brachyspira hyodysenteriae (strain ATCC 49526 / WA1), this protein is Dihydroorotate dehydrogenase B (NAD(+)), catalytic subunit (pyrD).